We begin with the raw amino-acid sequence, 367 residues long: Glutamate 5-kinase (367 aa).

Lys-10 is a binding site for ATP. Substrate-binding residues include Ser-50, Asp-137, and Asn-149. Residues 169-170 (TD) and 211-217 (TGGMSTK) each bind ATP. The 79-residue stretch at 275–353 (AGEITVDEGA…QEIDAILGYE (79 aa)) folds into the PUA domain.

Belongs to the glutamate 5-kinase family.

The protein localises to the cytoplasm. It carries out the reaction L-glutamate + ATP = L-glutamyl 5-phosphate + ADP. The protein operates within amino-acid biosynthesis; L-proline biosynthesis; L-glutamate 5-semialdehyde from L-glutamate: step 1/2. Its function is as follows. Catalyzes the transfer of a phosphate group to glutamate to form L-glutamate 5-phosphate. This is Glutamate 5-kinase from Escherichia coli O81 (strain ED1a).